Here is a 90-residue protein sequence, read N- to C-terminus: MVGISELSKEVAKKANTTQKVARTVIKSFLDEIVSQANGGQKINLAGFGIFERRTQGPRKARNPQTKKVIEVPSKKKFVFRASSKIKYQQ.

This sequence belongs to the bacterial histone-like protein family. As to quaternary structure, homotetramer.

Its function is as follows. Histone-like DNA-binding protein which is capable of wrapping DNA to stabilize it, and thus to prevent its denaturation under extreme environmental conditions. This chain is DNA-binding protein HTa, found in Thermoplasma acidophilum (strain ATCC 25905 / DSM 1728 / JCM 9062 / NBRC 15155 / AMRC-C165).